Reading from the N-terminus, the 305-residue chain is Ribonuclease BN (305 aa).

Residues His-64, His-66, Asp-68, His-69, His-141, Asp-212, and His-270 each contribute to the Zn(2+) site. Residue Asp-68 is the Proton acceptor of the active site.

The protein belongs to the RNase Z family. RNase BN subfamily. As to quaternary structure, homodimer. Zn(2+) is required as a cofactor.

Functionally, zinc phosphodiesterase, which has both exoribonuclease and endoribonuclease activities. The polypeptide is Ribonuclease BN (Shigella flexneri).